Consider the following 296-residue polypeptide: 4-hydroxy-tetrahydrodipicolinate synthase (296 aa).

A pyruvate-binding site is contributed by threonine 49. Tyrosine 137 serves as the catalytic Proton donor/acceptor. The Schiff-base intermediate with substrate role is filled by lysine 166. Isoleucine 208 lines the pyruvate pocket.

This sequence belongs to the DapA family. In terms of assembly, homotetramer; dimer of dimers.

The protein localises to the cytoplasm. The catalysed reaction is L-aspartate 4-semialdehyde + pyruvate = (2S,4S)-4-hydroxy-2,3,4,5-tetrahydrodipicolinate + H2O + H(+). Its pathway is amino-acid biosynthesis; L-lysine biosynthesis via DAP pathway; (S)-tetrahydrodipicolinate from L-aspartate: step 3/4. Its function is as follows. Catalyzes the condensation of (S)-aspartate-beta-semialdehyde [(S)-ASA] and pyruvate to 4-hydroxy-tetrahydrodipicolinate (HTPA). In Chlorobium chlorochromatii (strain CaD3), this protein is 4-hydroxy-tetrahydrodipicolinate synthase.